A 748-amino-acid chain; its full sequence is Rho GTPase-activating protein 24 (748 aa).

The interval 1 to 20 (MEENNDSTENPQQGQGRQNA) is disordered. Residues 7-18 (STENPQQGQGRQ) are compositionally biased toward polar residues. One can recognise a PH domain in the interval 19-125 (NAIKCGWLRK…WVKSIRRVIW (107 aa)). Residues 135 to 329 (QKLEDTVRYE…VMISKHDCLF (195 aa)) enclose the Rho-GAP domain. Disordered regions lie at residues 354-476 (TMGQ…GTHS) and 582-641 (DFFG…SSNH). Composition is skewed to polar residues over residues 356–374 (GQLQ…SRQC) and 382–405 (PQRS…SPKN). 8 positions are modified to phosphoserine: serine 369, serine 391, serine 396, serine 398, serine 402, serine 413, serine 415, and serine 437. Residues 432–476 (IVTNGSFSSSNAEGLEKTQTTPNGSLQARRSSSLKVSGTKMGTHS) are compositionally biased toward polar residues. The residue at position 452 (threonine 452) is a Phosphothreonine. Basic and acidic residues predominate over residues 600–615 (DLSHPRDYESKSDHRS). A compositionally biased stretch (low complexity) spans 617–641 (GGRSSRATSSSDNSETFVGNSSSNH). Positions 649 to 729 (SSLKQEMTKQ…KEMEQFFSTF (81 aa)) form a coiled coil.

As to quaternary structure, interacts with FLNA. Post-translationally, phosphorylated by ROCK, leading to activate the RacGAP activity. As to expression, isoform 1 is widely expressed with a higher level in kidney. Isoform 2 is mainly expressed in endothelial cells.

Its subcellular location is the cytoplasm. It localises to the cytoskeleton. It is found in the cell junction. The protein localises to the adherens junction. The protein resides in the focal adhesion. Its subcellular location is the cell projection. Rho GTPase-activating protein involved in cell polarity, cell morphology and cytoskeletal organization. Acts as a GTPase activator for the Rac-type GTPase by converting it to an inactive GDP-bound state. Controls actin remodeling by inactivating Rac downstream of Rho leading to suppress leading edge protrusion and promotes cell retraction to achieve cellular polarity. Able to suppress RAC1 and CDC42 activity in vitro. Overexpression induces cell rounding with partial or complete disruption of actin stress fibers and formation of membrane ruffles, lamellipodia, and filopodia. Isoform 2 is a vascular cell-specific GAP involved in modulation of angiogenesis. The protein is Rho GTPase-activating protein 24 (ARHGAP24) of Homo sapiens (Human).